Consider the following 395-residue polypeptide: Elongation factor Tu (395 aa).

In terms of domain architecture, tr-type G spans Lys-10–Glu-204. The segment at Gly-19–Thr-26 is G1. A GTP-binding site is contributed by Gly-19–Thr-26. Thr-26 provides a ligand contact to Mg(2+). A G2 region spans residues Gly-60 to Ser-64. The G3 stretch occupies residues Asp-81–Gly-84. Residues Asp-81–His-85 and Asn-136–Asp-139 each bind GTP. A G4 region spans residues Asn-136–Asp-139. Residues Ser-174–Leu-176 are G5.

This sequence belongs to the TRAFAC class translation factor GTPase superfamily. Classic translation factor GTPase family. EF-Tu/EF-1A subfamily. In terms of assembly, monomer. Phosphorylated on serine and/or threonine residue(s). Dephosphorylated by stp.

It localises to the cytoplasm. It catalyses the reaction GTP + H2O = GDP + phosphate + H(+). Its function is as follows. GTP hydrolase that promotes the GTP-dependent binding of aminoacyl-tRNA to the A-site of ribosomes during protein biosynthesis. This Listeria innocua serovar 6a (strain ATCC BAA-680 / CLIP 11262) protein is Elongation factor Tu.